We begin with the raw amino-acid sequence, 485 residues long: Eukaryotic translation initiation factor 3 subunit E (485 aa).

A PCI domain is found at asparagine 219–threonine 391. The interval glutamine 444 to lysine 485 is disordered. A compositionally biased stretch (basic and acidic residues) spans lysine 451–glycine 475. The span at glycine 476–lysine 485 shows a compositional bias: basic residues.

The protein belongs to the eIF-3 subunit E family. As to quaternary structure, component of the eukaryotic translation initiation factor 3 (eIF-3) complex.

It is found in the cytoplasm. Component of the eukaryotic translation initiation factor 3 (eIF-3) complex, which is involved in protein synthesis of a specialized repertoire of mRNAs and, together with other initiation factors, stimulates binding of mRNA and methionyl-tRNAi to the 40S ribosome. The eIF-3 complex specifically targets and initiates translation of a subset of mRNAs involved in cell proliferation. The chain is Eukaryotic translation initiation factor 3 subunit E from Monosiga brevicollis (Choanoflagellate).